Here is a 387-residue protein sequence, read N- to C-terminus: ATP phosphoribosyltransferase regulatory subunit (387 aa).

The protein belongs to the class-II aminoacyl-tRNA synthetase family. HisZ subfamily. As to quaternary structure, heteromultimer composed of HisG and HisZ subunits.

Its subcellular location is the cytoplasm. It functions in the pathway amino-acid biosynthesis; L-histidine biosynthesis; L-histidine from 5-phospho-alpha-D-ribose 1-diphosphate: step 1/9. In terms of biological role, required for the first step of histidine biosynthesis. May allow the feedback regulation of ATP phosphoribosyltransferase activity by histidine. This is ATP phosphoribosyltransferase regulatory subunit from Psychrobacter arcticus (strain DSM 17307 / VKM B-2377 / 273-4).